The primary structure comprises 152 residues: FMN reductase (NADH) RutF (152 aa).

The protein belongs to the non-flavoprotein flavin reductase family. RutF subfamily.

It carries out the reaction FMNH2 + NAD(+) = FMN + NADH + 2 H(+). Catalyzes the reduction of FMN to FMNH2 which is used to reduce pyrimidine by RutA via the Rut pathway. The chain is FMN reductase (NADH) RutF from Shigella sonnei (strain Ss046).